The sequence spans 269 residues: Eukaryotic translation initiation factor 3 subunit G-1 (269 aa).

One can recognise an RRM domain in the interval 188–266 (AAIRISNLSE…LILSVEWSKP (79 aa)). S198 carries the phosphoserine modification.

It belongs to the eIF-3 subunit G family. In terms of assembly, component of the eukaryotic translation initiation factor 3 (eIF-3) complex. The eIF-3 complex interacts with pix.

Its subcellular location is the cytoplasm. Its function is as follows. RNA-binding component of the eukaryotic translation initiation factor 3 (eIF-3) complex, which is involved in protein synthesis of a specialized repertoire of mRNAs and, together with other initiation factors, stimulates binding of mRNA and methionyl-tRNAi to the 40S ribosome. The eIF-3 complex specifically targets and initiates translation of a subset of mRNAs involved in cell proliferation. This subunit can bind 18S rRNA. The sequence is that of Eukaryotic translation initiation factor 3 subunit G-1 from Drosophila melanogaster (Fruit fly).